A 122-amino-acid polypeptide reads, in one-letter code: Large ribosomal subunit protein uL14 (122 aa).

This sequence belongs to the universal ribosomal protein uL14 family. Part of the 50S ribosomal subunit. Forms a cluster with proteins L3 and L19. In the 70S ribosome, L14 and L19 interact and together make contacts with the 16S rRNA in bridges B5 and B8.

Binds to 23S rRNA. Forms part of two intersubunit bridges in the 70S ribosome. The sequence is that of Large ribosomal subunit protein uL14 from Corynebacterium efficiens (strain DSM 44549 / YS-314 / AJ 12310 / JCM 11189 / NBRC 100395).